The chain runs to 1349 residues: Aldehyde oxidase 2 (1349 aa).

The region spanning 8-96 (DELVFFVNGR…GAAVTTVEGV (89 aa)) is the 2Fe-2S ferredoxin-type domain. The [2Fe-2S] cluster site is built by Cys-47, Cys-52, Cys-55, and Cys-78. Residue Gln-117 participates in Mo-molybdopterin binding. Residues Cys-118, Cys-121, Cys-153, and Cys-155 each coordinate [2Fe-2S] cluster. Cys-155 provides a ligand contact to Mo-molybdopterin. In terms of domain architecture, FAD-binding PCMH-type spans 240-425 (FYGERVTWIS…ESVHIPHSQK (186 aa)). FAD contacts are provided by residues 268 to 275 (LVVGNTSL), Ala-349, Ser-358, His-362, Asp-371, and Leu-415. Mo-molybdopterin-binding positions include 816 to 817 (GF), 1098 to 1101 (ASVG), Gln-1213, and Leu-1278. Glu-1280 serves as the catalytic Proton acceptor; for azaheterocycle hydroxylase activity.

It belongs to the xanthine dehydrogenase family. In terms of assembly, homodimer. [2Fe-2S] cluster serves as cofactor. The cofactor is FAD. Requires Mo-molybdopterin as cofactor. Only detected at very few levels in nasal mucosa.

Its subcellular location is the cytoplasm. It catalyses the reaction an aldehyde + O2 + H2O = a carboxylate + H2O2 + H(+). In terms of biological role, oxidase with broad substrate specificity, oxidizing aromatic azaheterocycles, such as phthalazine, as well as aldehydes, such as benzaldehyde and retinal. In Macaca fascicularis (Crab-eating macaque), this protein is Aldehyde oxidase 2 (AOX2).